We begin with the raw amino-acid sequence, 545 residues long: Sulfite oxidase, mitochondrial (545 aa).

A mitochondrion-targeting transit peptide spans 1–79; it reads MLLLHRAVVL…YQDHRCRAAQ (79 aa). In terms of domain architecture, Cytochrome b5 heme-binding spans 82–161; the sequence is TRIYTKEEVS…LAQYKVGELN (80 aa). H118 lines the heme b pocket. S123 carries the phosphoserine modification. Residues H143, Q145, and H147 each coordinate heme b. Residues 165 to 174 are hinge; the sequence is KVAPTVETSD. Residues 175–401 form a moco domain region; the sequence is PYADDPVRHP…YSHWQRRDYK (227 aa). Residues 215–219, C264, D322, H361, R366, and 377–379 each bind Mo-molybdopterin; these read FTRNH and HVK. The homodimerization stretch occupies residues 402-538; the sequence is GFSPSVDWDT…RGVLSNAWHR (137 aa).

In terms of assembly, homodimer. It depends on heme b as a cofactor. Mo-molybdopterin serves as cofactor.

The protein resides in the mitochondrion intermembrane space. The enzyme catalyses sulfite + O2 + H2O = sulfate + H2O2. The protein operates within energy metabolism; sulfur metabolism. Functionally, catalyzes the oxidation of sulfite to sulfate, the terminal reaction in the oxidative degradation of sulfur-containing amino acids. The polypeptide is Sulfite oxidase, mitochondrial (SUOX) (Macaca fascicularis (Crab-eating macaque)).